The following is a 440-amino-acid chain: Xylose isomerase (440 aa).

Catalysis depends on residues histidine 100 and aspartate 103. Glutamate 231, glutamate 267, histidine 270, aspartate 295, aspartate 306, aspartate 308, and aspartate 338 together coordinate Mg(2+).

It belongs to the xylose isomerase family. In terms of assembly, homotetramer. Mg(2+) serves as cofactor.

Its subcellular location is the cytoplasm. It carries out the reaction alpha-D-xylose = alpha-D-xylulofuranose. In Paraburkholderia phytofirmans (strain DSM 17436 / LMG 22146 / PsJN) (Burkholderia phytofirmans), this protein is Xylose isomerase.